The following is a 247-amino-acid chain: Proteasome subunit alpha (247 aa).

It belongs to the peptidase T1A family. The 20S proteasome core is composed of 14 alpha and 14 beta subunits that assemble into four stacked heptameric rings, resulting in a barrel-shaped structure. The two inner rings, each composed of seven catalytic beta subunits, are sandwiched by two outer rings, each composed of seven alpha subunits. The catalytic chamber with the active sites is on the inside of the barrel. Has a gated structure, the ends of the cylinder being occluded by the N-termini of the alpha-subunits. Is capped at one or both ends by the proteasome regulatory ATPase, PAN.

It is found in the cytoplasm. Its activity is regulated as follows. The formation of the proteasomal ATPase PAN-20S proteasome complex, via the docking of the C-termini of PAN into the intersubunit pockets in the alpha-rings, triggers opening of the gate for substrate entry. Interconversion between the open-gate and close-gate conformations leads to a dynamic regulation of the 20S proteasome proteolysis activity. In terms of biological role, component of the proteasome core, a large protease complex with broad specificity involved in protein degradation. The chain is Proteasome subunit alpha from Methanosarcina acetivorans (strain ATCC 35395 / DSM 2834 / JCM 12185 / C2A).